Here is a 330-residue protein sequence, read N- to C-terminus: DNA-directed RNA polymerase subunit alpha (330 aa).

The interval 1–237 (MYTEINEMLT…RQLHAFVDMK (237 aa)) is alpha N-terminal domain (alpha-NTD). An alpha C-terminal domain (alpha-CTD) region spans residues 251–330 (FDPVLLRSVD…ENWPPASLGE (80 aa)).

This sequence belongs to the RNA polymerase alpha chain family. As to quaternary structure, homodimer. The RNAP catalytic core consists of 2 alpha, 1 beta, 1 beta' and 1 omega subunit. When a sigma factor is associated with the core the holoenzyme is formed, which can initiate transcription.

It catalyses the reaction RNA(n) + a ribonucleoside 5'-triphosphate = RNA(n+1) + diphosphate. Its function is as follows. DNA-dependent RNA polymerase catalyzes the transcription of DNA into RNA using the four ribonucleoside triphosphates as substrates. This Legionella pneumophila (strain Corby) protein is DNA-directed RNA polymerase subunit alpha.